The sequence spans 504 residues: ATP synthase subunit alpha (504 aa).

169 to 176 lines the ATP pocket; that stretch reads GDRQIGKT.

It belongs to the ATPase alpha/beta chains family. In terms of assembly, F-type ATPases have 2 components, CF(1) - the catalytic core - and CF(0) - the membrane proton channel. CF(1) has five subunits: alpha(3), beta(3), gamma(1), delta(1), epsilon(1). CF(0) has three main subunits: a(1), b(2) and c(9-12). The alpha and beta chains form an alternating ring which encloses part of the gamma chain. CF(1) is attached to CF(0) by a central stalk formed by the gamma and epsilon chains, while a peripheral stalk is formed by the delta and b chains.

The protein localises to the cell membrane. The catalysed reaction is ATP + H2O + 4 H(+)(in) = ADP + phosphate + 5 H(+)(out). Its function is as follows. Produces ATP from ADP in the presence of a proton gradient across the membrane. The alpha chain is a regulatory subunit. The sequence is that of ATP synthase subunit alpha from Syntrophomonas wolfei subsp. wolfei (strain DSM 2245B / Goettingen).